The primary structure comprises 1062 residues: Suppressor of mar1-1 protein (1062 aa).

Positions 1 to 17 are enriched in polar residues; that stretch reads MSENTTAPSDNITNEQR. 6 disordered regions span residues 1–27, 188–217, 267–337, 370–398, 595–634, and 681–804; these read MSEN…DDVD, ENSS…ASTS, TKQE…KKRT, SSKF…SATQ, EIST…QQEG, and SGEE…GNLG. Serine 2 bears the N-acetylserine mark. Positions 189-205 are enriched in low complexity; it reads NSSNNTSSQHNTSSSRR. Composition is skewed to polar residues over residues 267–279, 287–298, and 305–323; these read TKQE…APSS, SLTSVPQRTNNE, and STAN…NNLI. The span at 325–335 shows a compositional bias: basic residues; sequence IKRKRGRPPKK. Polar residues-rich tracts occupy residues 370–385 and 610–629; these read SSKF…NPVS and TKGS…GISD. 4 positions are modified to phosphoserine: serine 378, serine 379, serine 628, and serine 681. Residues 685 to 699 show a composition bias toward basic and acidic residues; sequence AITKENAEYERKTPG. At threonine 697 the chain carries Phosphothreonine. Over residues 704–716 the composition is skewed to polar residues; that stretch reads TTFVPLENSQPSD. The residue at position 712 (serine 712) is a Phosphoserine; by ATM or ATR. Residue serine 738 is modified to Phosphoserine. The segment covering 781-793 has biased composition (polar residues); it reads KGTSSIHNDTESA. Threonine 817 bears the Phosphothreonine mark.

Interacts with RFM1. This interaction is required to recruit HST1.

The protein localises to the nucleus. DNA-binding protein that specifically binds the regulatory region of middle sporulation genes (MSE). Required for the repression of middle sporulation genes during vegetative growth. Represses expression via the recruitment of histone deacetylase HST1. This is Suppressor of mar1-1 protein (SUM1) from Saccharomyces cerevisiae (strain ATCC 204508 / S288c) (Baker's yeast).